The sequence spans 83 residues: uncharacterized protein (83 aa).

Positions 58-83 (EHGHDDEYDEFSDPNAWVPRRSRDTG) are disordered.

This is an uncharacterized protein from Mycobacterium tuberculosis (strain CDC 1551 / Oshkosh).